A 111-amino-acid polypeptide reads, in one-letter code: MADWARAQSPGAVEEILDRENKRMADNLASKVTRLKSLALDIDKDAEDQNRYLDGMDSDFTSMTGLLTGSVKRFSTMARSGRDNRKLLCGMAVGLIVAFFILSYFLSRART.

Over 1 to 86 (MADWARAQSP…MARSGRDNRK (86 aa)) the chain is Cytoplasmic. Residues Ser-9 and Ser-37 each carry the phosphoserine modification. The region spanning 15–77 (EILDRENKRM…TGSVKRFSTM (63 aa)) is the t-SNARE coiled-coil homology domain. Residues 87-107 (LLCGMAVGLIVAFFILSYFLS) traverse the membrane as a helical; Anchor for type IV membrane protein segment. Topologically, residues 108 to 111 (RART) are lumenal.

As to quaternary structure, component of a SNARE complex consisting of STX5, YKT6, GOSR1 and BET1L. Interacts with STX5.

It localises to the golgi apparatus membrane. It is found in the golgi apparatus. Its subcellular location is the trans-Golgi network membrane. Vesicle SNARE required for targeting and fusion of retrograde transport vesicles with the Golgi complex. Required for the integrity of the Golgi complex. This is BET1-like protein from Pongo abelii (Sumatran orangutan).